A 102-amino-acid polypeptide reads, in one-letter code: Urease subunit beta (102 aa).

Belongs to the urease beta subunit family. As to quaternary structure, heterotrimer of UreA (gamma), UreB (beta) and UreC (alpha) subunits. Three heterotrimers associate to form the active enzyme.

Its subcellular location is the cytoplasm. The enzyme catalyses urea + 2 H2O + H(+) = hydrogencarbonate + 2 NH4(+). It functions in the pathway nitrogen metabolism; urea degradation; CO(2) and NH(3) from urea (urease route): step 1/1. The sequence is that of Urease subunit beta from Methylibium petroleiphilum (strain ATCC BAA-1232 / LMG 22953 / PM1).